Here is a 268-residue protein sequence, read N- to C-terminus: Probable RNA methyltransferase C2A9.10 (268 aa).

Positions 23 to 258 (DPRLKCLPDS…RTMYIYKKKG (236 aa)) constitute a Bin3-type SAM domain.

The protein belongs to the methyltransferase superfamily.

In terms of biological role, probable RNA methyltransferase. The polypeptide is Probable RNA methyltransferase C2A9.10 (Schizosaccharomyces pombe (strain 972 / ATCC 24843) (Fission yeast)).